The following is a 376-amino-acid chain: Nucleoside diphosphate kinase homolog 7 (376 aa).

The region spanning 3 to 91 is the DM10 domain; the sequence is HSERFVFIAE…YTARQLGSRK (89 aa).

Belongs to the NDK family. In terms of assembly, component of sperm flagellar doublet microtubules. Component of the gamma-tubulin ring complex. Undergoes autophosphorylation. In terms of tissue distribution, expressed in airway epithelial cells.

The protein resides in the cytoplasm. It localises to the cytoskeleton. The protein localises to the microtubule organizing center. It is found in the centrosome. Its subcellular location is the nucleus. The protein resides in the spindle. It localises to the cilium axoneme. The protein localises to the flagellum axoneme. It is found in the cell projection. Its subcellular location is the cilium. Its function is as follows. Possesses an intrinsic kinase activity. Displays 3'-5' exonuclease activity with a preference for single-stranded DNA. Does not seem to have nucleoside diphosphate kinase activity. Functional component of the gamma-tubulin ring complex, implicated in the regulation of the microtubule-nucleating activity of the gamma-tubulin ring complex in centrosomes, in a kinase activity-dependent manner. Part of the dynein-decorated doublet microtubules (DMTs) in cilia axoneme, which is required for motile cilia beating. This Homo sapiens (Human) protein is Nucleoside diphosphate kinase homolog 7.